We begin with the raw amino-acid sequence, 136 residues long: Histone H3 (136 aa).

This sequence belongs to the histone H3 family. As to quaternary structure, the nucleosome is a histone octamer containing two molecules each of H2A, H2B, H3 and H4 assembled in one H3-H4 heterotetramer and two H2A-H2B heterodimers. The octamer wraps approximately 147 bp of DNA.

The protein resides in the nucleomorph. It localises to the chromosome. Core component of nucleosome. Nucleosomes wrap and compact DNA into chromatin, limiting DNA accessibility to the cellular machineries which require DNA as a template. Histones thereby play a central role in transcription regulation, DNA repair, DNA replication and chromosomal stability. DNA accessibility is regulated via a complex set of post-translational modifications of histones, also called histone code, and nucleosome remodeling. This chain is Histone H3, found in Guillardia theta (Cryptophyte).